The sequence spans 250 residues: Pyridoxine 5'-phosphate synthase (250 aa).

3-amino-2-oxopropyl phosphate contacts are provided by asparagine 8 and arginine 19. Histidine 44 (proton acceptor) is an active-site residue. Residues arginine 46 and histidine 51 each coordinate 1-deoxy-D-xylulose 5-phosphate. Catalysis depends on glutamate 76, which acts as the Proton acceptor. A 1-deoxy-D-xylulose 5-phosphate-binding site is contributed by threonine 106. The active-site Proton donor is histidine 200. 3-amino-2-oxopropyl phosphate is bound by residues aspartate 201 and 223 to 224 (GH).

Belongs to the PNP synthase family. As to quaternary structure, homooctamer; tetramer of dimers.

The protein localises to the cytoplasm. The enzyme catalyses 3-amino-2-oxopropyl phosphate + 1-deoxy-D-xylulose 5-phosphate = pyridoxine 5'-phosphate + phosphate + 2 H2O + H(+). It functions in the pathway cofactor biosynthesis; pyridoxine 5'-phosphate biosynthesis; pyridoxine 5'-phosphate from D-erythrose 4-phosphate: step 5/5. Catalyzes the complicated ring closure reaction between the two acyclic compounds 1-deoxy-D-xylulose-5-phosphate (DXP) and 3-amino-2-oxopropyl phosphate (1-amino-acetone-3-phosphate or AAP) to form pyridoxine 5'-phosphate (PNP) and inorganic phosphate. The sequence is that of Pyridoxine 5'-phosphate synthase from Allorhizobium ampelinum (strain ATCC BAA-846 / DSM 112012 / S4) (Agrobacterium vitis (strain S4)).